A 155-amino-acid polypeptide reads, in one-letter code: Large ribosomal subunit protein eL24B (155 aa).

Position 7 is a phosphoserine (Ser7). A disordered region spans residues 66-155 (EVAKKRSRKT…AFQKVAATSR (90 aa)). Over residues 89 to 129 (LIKERRSLKPEVRKANREEKLKANKEKKRAEKAARKAEKAK) the composition is skewed to basic and acidic residues.

It belongs to the eukaryotic ribosomal protein eL24 family. In terms of assembly, component of the large ribosomal subunit (LSU). Mature yeast ribosomes consist of a small (40S) and a large (60S) subunit. The 40S small subunit contains 1 molecule of ribosomal RNA (18S rRNA) and 33 different proteins (encoded by 57 genes). The large 60S subunit contains 3 rRNA molecules (25S, 5.8S and 5S rRNA) and 46 different proteins (encoded by 81 genes).

The protein resides in the cytoplasm. Its function is as follows. Component of the ribosome, a large ribonucleoprotein complex responsible for the synthesis of proteins in the cell. The small ribosomal subunit (SSU) binds messenger RNAs (mRNAs) and translates the encoded message by selecting cognate aminoacyl-transfer RNA (tRNA) molecules. The large subunit (LSU) contains the ribosomal catalytic site termed the peptidyl transferase center (PTC), which catalyzes the formation of peptide bonds, thereby polymerizing the amino acids delivered by tRNAs into a polypeptide chain. The nascent polypeptides leave the ribosome through a tunnel in the LSU and interact with protein factors that function in enzymatic processing, targeting, and the membrane insertion of nascent chains at the exit of the ribosomal tunnel. This chain is Large ribosomal subunit protein eL24B, found in Saccharomyces cerevisiae (strain ATCC 204508 / S288c) (Baker's yeast).